Consider the following 404-residue polypeptide: Cysteine desulfurase IscS (404 aa).

Residues 75-76 (AT), Asn-155, Gln-183, and 203-205 (SAH) each bind pyridoxal 5'-phosphate. Lys-206 carries the N6-(pyridoxal phosphate)lysine modification. Thr-243 is a binding site for pyridoxal 5'-phosphate. Cys-328 acts as the Cysteine persulfide intermediate in catalysis. Cys-328 contributes to the [2Fe-2S] cluster binding site.

This sequence belongs to the class-V pyridoxal-phosphate-dependent aminotransferase family. NifS/IscS subfamily. As to quaternary structure, homodimer. Forms a heterotetramer with IscU, interacts with other sulfur acceptors. Pyridoxal 5'-phosphate is required as a cofactor.

The protein resides in the cytoplasm. It carries out the reaction (sulfur carrier)-H + L-cysteine = (sulfur carrier)-SH + L-alanine. The protein operates within cofactor biosynthesis; iron-sulfur cluster biosynthesis. Its function is as follows. Master enzyme that delivers sulfur to a number of partners involved in Fe-S cluster assembly, tRNA modification or cofactor biosynthesis. Catalyzes the removal of elemental sulfur atoms from cysteine to produce alanine. Functions as a sulfur delivery protein for Fe-S cluster synthesis onto IscU, an Fe-S scaffold assembly protein, as well as other S acceptor proteins. This is Cysteine desulfurase IscS from Azotobacter vinelandii (strain DJ / ATCC BAA-1303).